The sequence spans 160 residues: Transcriptional repressor NrdR (160 aa).

A zinc finger lies at 3 to 34 (CPRCHHNNSRVIDSRQADDGRAIRRRRECENC). The region spanning 49–139 (LLVIKKNGDR…VYRQFKDMSV (91 aa)) is the ATP-cone domain.

This sequence belongs to the NrdR family. Requires Zn(2+) as cofactor.

In terms of biological role, negatively regulates transcription of bacterial ribonucleotide reductase nrd genes and operons by binding to NrdR-boxes. This chain is Transcriptional repressor NrdR, found in Enterococcus faecalis (strain ATCC 700802 / V583).